The chain runs to 147 residues: Nucleoside diphosphate kinase (147 aa).

Residues Lys9, Phe57, Arg85, Thr91, Arg102, and Asn112 each contribute to the ATP site. His115 acts as the Pros-phosphohistidine intermediate in catalysis.

Belongs to the NDK family. Homotetramer. Mg(2+) is required as a cofactor.

The protein resides in the cytoplasm. The catalysed reaction is a 2'-deoxyribonucleoside 5'-diphosphate + ATP = a 2'-deoxyribonucleoside 5'-triphosphate + ADP. The enzyme catalyses a ribonucleoside 5'-diphosphate + ATP = a ribonucleoside 5'-triphosphate + ADP. Its function is as follows. Major role in the synthesis of nucleoside triphosphates other than ATP. The ATP gamma phosphate is transferred to the NDP beta phosphate via a ping-pong mechanism, using a phosphorylated active-site intermediate. This Listeria innocua serovar 6a (strain ATCC BAA-680 / CLIP 11262) protein is Nucleoside diphosphate kinase.